The chain runs to 267 residues: 14-3-3-like protein GF14 chi (267 aa).

An N-acetylalanine modification is found at alanine 2. Phosphoserine occurs at positions 72 and 195. Position 216 is a phosphothreonine (threonine 216). Phosphoserine is present on serine 267.

It belongs to the 14-3-3 family. As to quaternary structure, interacts with TPK1. Interacts with the isocitrate dehydrogenase IDH3, and malate dehydrogenases MDH1 and MDH2. Interacts with DREB1A and DREB1B in the nucleus. Interacts with CINV1.

It localises to the nucleus. The protein resides in the cytoplasm. In terms of biological role, is associated with a DNA binding complex that binds to the G box, a well-characterized cis-acting DNA regulatory element found in plant genes. Involved in the regulation of nutrient metabolism. The protein is 14-3-3-like protein GF14 chi (GRF1) of Arabidopsis thaliana (Mouse-ear cress).